The chain runs to 474 residues: Sensor protein CreC (474 aa).

The Periplasmic portion of the chain corresponds to 1 to 6 (MRIGMR). A helical transmembrane segment spans residues 7 to 27 (LLLGYFLLVAVAAWFVLAIFV). Topologically, residues 28–146 (KEVKPGVRRA…LQNPADPESS (119 aa)) are cytoplasmic. A helical membrane pass occupies residues 147–167 (VMYVAAPIMDGSRLIGVLSVG). Residues 168–183 (KPNAAMAPVIKRSERR) lie on the Periplasmic side of the membrane. A helical transmembrane segment spans residues 184–204 (ILWASAILLGIALVIGAGMVW). One can recognise an HAMP domain in the interval 205–255 (WINRSIARLTRYADSVTDNKPVPLPDLGSSELRKLAQALESMRVKLEGKNY). Residues 205–474 (WINRSIARLT…ASLRLHRHFT (270 aa)) lie on the Cytoplasmic side of the membrane. The 212-residue stretch at 262 to 473 (ALTHELKSPL…LASLRLHRHF (212 aa)) folds into the Histidine kinase domain. Histidine 265 bears the Phosphohistidine; by autocatalysis mark.

Post-translationally, autophosphorylated.

Its subcellular location is the cell inner membrane. It catalyses the reaction ATP + protein L-histidine = ADP + protein N-phospho-L-histidine.. Functionally, member of the two-component regulatory system CreC/CreB involved in catabolic regulation. CreC may function as a membrane-associated protein kinase that phosphorylates CreB in response to environmental signals. CreC can also phosphorylate PhoB. The sequence is that of Sensor protein CreC (creC) from Escherichia coli (strain K12).